A 321-amino-acid chain; its full sequence is 2,3,4,5-tetrahydropyridine-2,6-dicarboxylate N-succinyltransferase (321 aa).

Mg(2+) contacts are provided by D166 and E183. Residue E199 is the Acyl-anhydride intermediate of the active site. Succinyl-CoA contacts are provided by residues R201, G216, S219, A242, 257 to 258 (EA), G265, K281, and 294 to 297 (RRNS).

It belongs to the type 2 tetrahydrodipicolinate N-succinyltransferase family. Homotrimer.

Its subcellular location is the cytoplasm. It carries out the reaction (S)-2,3,4,5-tetrahydrodipicolinate + succinyl-CoA + H2O = (S)-2-succinylamino-6-oxoheptanedioate + CoA. Its pathway is amino-acid biosynthesis; L-lysine biosynthesis via DAP pathway; LL-2,6-diaminopimelate from (S)-tetrahydrodipicolinate (succinylase route): step 1/3. Catalyzes the conversion of the cyclic tetrahydrodipicolinate (THDP) into the acyclic N-succinyl-L-2-amino-6-oxopimelate using succinyl-CoA. This chain is 2,3,4,5-tetrahydropyridine-2,6-dicarboxylate N-succinyltransferase, found in Micrococcus luteus (strain ATCC 4698 / DSM 20030 / JCM 1464 / CCM 169 / CCUG 5858 / IAM 1056 / NBRC 3333 / NCIMB 9278 / NCTC 2665 / VKM Ac-2230) (Micrococcus lysodeikticus).